Consider the following 224-residue polypeptide: Ribonuclease 3 (224 aa).

The RNase III domain occupies 4 to 126 (LDRLQRQISY…IIGAISLDSS (123 aa)). Residue Glu-39 coordinates Mg(2+). Asp-43 is an active-site residue. The Mg(2+) site is built by Asp-112 and Glu-115. Residue Glu-115 is part of the active site. Residues 153 to 223 (DPKTRLQEYL…AEQILTALEI (71 aa)) enclose the DRBM domain.

This sequence belongs to the ribonuclease III family. As to quaternary structure, homodimer. Mg(2+) serves as cofactor.

Its subcellular location is the cytoplasm. The enzyme catalyses Endonucleolytic cleavage to 5'-phosphomonoester.. Functionally, digests double-stranded RNA. Involved in the processing of primary rRNA transcript to yield the immediate precursors to the large and small rRNAs (23S and 16S). Processes some mRNAs, and tRNAs when they are encoded in the rRNA operon. Processes pre-crRNA and tracrRNA of type II CRISPR loci if present in the organism. The chain is Ribonuclease 3 from Mannheimia succiniciproducens (strain KCTC 0769BP / MBEL55E).